Here is a 294-residue protein sequence, read N- to C-terminus: Bifunctional protein FolD (294 aa).

Residues 175-177 (GVS) and Ile243 each bind NADP(+).

The protein belongs to the tetrahydrofolate dehydrogenase/cyclohydrolase family. Homodimer.

The catalysed reaction is (6R)-5,10-methylene-5,6,7,8-tetrahydrofolate + NADP(+) = (6R)-5,10-methenyltetrahydrofolate + NADPH. It catalyses the reaction (6R)-5,10-methenyltetrahydrofolate + H2O = (6R)-10-formyltetrahydrofolate + H(+). Its pathway is one-carbon metabolism; tetrahydrofolate interconversion. Functionally, catalyzes the oxidation of 5,10-methylenetetrahydrofolate to 5,10-methenyltetrahydrofolate and then the hydrolysis of 5,10-methenyltetrahydrofolate to 10-formyltetrahydrofolate. The polypeptide is Bifunctional protein FolD (Xanthomonas campestris pv. campestris (strain 8004)).